The chain runs to 369 residues: UDP-N-acetyl-3-dehydro-alpha-D-glucosamine 3-aminotranferase (369 aa).

Lysine 190 bears the N6-(pyridoxal phosphate)lysine mark.

It belongs to the DegT/DnrJ/EryC1 family. Pyridoxal 5'-phosphate serves as cofactor.

The catalysed reaction is UDP-2-acetamido-3-amino-2,3-dideoxy-alpha-D-glucopyranose + 2-oxoglutarate = UDP-2-acetamido-3-dehydro-2-deoxy-alpha-D-glucopyranose + L-glutamate. Its pathway is bacterial outer membrane biogenesis; LPS lipid A biosynthesis. Aminotranferase involved in the synthesis of 2,3-diamino-2,3-dideoxy-D-glucopyranose (GlcN3N), which is a component of lipid A in some species. Catalyzes the amination of UDP-2-acetamido-3-dehydro-2-deoxy-alpha-D-glucopyranose (UDP-3-oxo-GlcNAc) to UDP-2-acetamido-3-amino-2,3-dideoxy-alpha-D-glucopyranose (UDP-GlcNAc3N), using L-glutamate as the amine donor. Other amine donors, such as alanine and glutamine, can substitute for glutamate, but product formation is slower. The sequence is that of UDP-N-acetyl-3-dehydro-alpha-D-glucosamine 3-aminotranferase from Acidithiobacillus ferrooxidans (strain ATCC 23270 / DSM 14882 / CIP 104768 / NCIMB 8455) (Ferrobacillus ferrooxidans (strain ATCC 23270)).